A 388-amino-acid chain; its full sequence is Succinate--CoA ligase [ADP-forming] subunit beta (388 aa).

The 236-residue stretch at 9–244 (KQLFAQYGLP…PAQNDAREAH (236 aa)) folds into the ATP-grasp domain. ATP contacts are provided by residues Lys46, 53–55 (GRG), Glu99, Thr102, and Glu107. 2 residues coordinate Mg(2+): Asn199 and Asp213. Substrate is bound by residues Asn264 and 321–323 (GIV).

Belongs to the succinate/malate CoA ligase beta subunit family. As to quaternary structure, heterotetramer of two alpha and two beta subunits. Mg(2+) is required as a cofactor.

It carries out the reaction succinate + ATP + CoA = succinyl-CoA + ADP + phosphate. It catalyses the reaction GTP + succinate + CoA = succinyl-CoA + GDP + phosphate. The protein operates within carbohydrate metabolism; tricarboxylic acid cycle; succinate from succinyl-CoA (ligase route): step 1/1. Functionally, succinyl-CoA synthetase functions in the citric acid cycle (TCA), coupling the hydrolysis of succinyl-CoA to the synthesis of either ATP or GTP and thus represents the only step of substrate-level phosphorylation in the TCA. The beta subunit provides nucleotide specificity of the enzyme and binds the substrate succinate, while the binding sites for coenzyme A and phosphate are found in the alpha subunit. This Edwardsiella ictaluri (strain 93-146) protein is Succinate--CoA ligase [ADP-forming] subunit beta.